A 370-amino-acid chain; its full sequence is Cytochrome b (370 aa).

The next 4 membrane-spanning stretches (helical) occupy residues 25–45 (FGSMLLACSTLQVMTGFFLAV), 69–90 (WLMQNLHAIGASMFFICIYIHI), 105–125 (WLSGTTLLIMLMATAFFGYVL), and 170–190 (FFALHFILPFGIISLSSLHIM). Residues His75 and His89 each contribute to the heme b site. Heme b-binding residues include His174 and His188. His193 contacts a ubiquinone. 4 helical membrane passes run 218-238 (YKDLLMLTMMTTLLLMIVSFF), 280-300 (LGGALALTMSIMILLTVPFTH), 312-332 (FMQLMFWTFAATFLVITWTAT), and 339-358 (FTTISQVAALMYFMFFISNP).

It belongs to the cytochrome b family. As to quaternary structure, the cytochrome bc1 complex contains 3 respiratory subunits (MT-CYB, CYC1 and UQCRFS1), 2 core proteins (UQCRC1 and UQCRC2) and probably 6 low-molecular weight proteins. Heme b is required as a cofactor.

It is found in the mitochondrion inner membrane. In terms of biological role, component of the ubiquinol-cytochrome c reductase complex (complex III or cytochrome b-c1 complex) that is part of the mitochondrial respiratory chain. The b-c1 complex mediates electron transfer from ubiquinol to cytochrome c. Contributes to the generation of a proton gradient across the mitochondrial membrane that is then used for ATP synthesis. This Chilabothrus fordii (Ford's boa) protein is Cytochrome b (MT-CYB).